The following is a 294-amino-acid chain: Metallophosphoesterase MPPED2 (294 aa).

Mn(2+)-binding residues include D65, H67, D86, N117, and H213. Residue 117-118 (NH) coordinates GMP. GMP-binding positions include 225-226 (KE) and 254-255 (HE). Position 254 (H254) interacts with Mn(2+).

This sequence belongs to the UPF0046 family. In terms of assembly, homodimer. The cofactor is Mn(2+). Requires Co(2+) as cofactor. Expressed in fetal brain (at protein level). detected in fetal and adult brain.

Its activity is regulated as follows. Inhibited by nmolar levels of AMP and GMP. Displays low metallophosphoesterase activity (in vitro). May play a role in the development of the nervous system. This is Metallophosphoesterase MPPED2 (Mpped2) from Rattus norvegicus (Rat).